The sequence spans 595 residues: Potassium-transporting ATPase potassium-binding subunit (595 aa).

A run of 10 helical transmembrane segments spans residues 9 to 29, 63 to 83, 135 to 155, 177 to 197, 285 to 305, 312 to 332, 412 to 432, 451 to 471, 516 to 536, and 560 to 580; these read ICGYLGVLLALAKPLGSYMAA, TGYASAFLVFNLLGVLAVYAL, GLTVQNFVSAASGMAVLVALI, ILHILLPLSFLLALLLIGQGV, FLEMLAILVISGALCHTFGVM, GWVILAAMTLIFVPLLFVTVL, GLYGMLVFAIVAVFVAGLMIG, AIVILVPPLMVLGGTAVAVML, LMLGLAMWFSRYWLAVPVLAI, and FVGLLVGVVIIVGALTFIPAL.

It belongs to the KdpA family. The system is composed of three essential subunits: KdpA, KdpB and KdpC.

It is found in the cell inner membrane. Functionally, part of the high-affinity ATP-driven potassium transport (or Kdp) system, which catalyzes the hydrolysis of ATP coupled with the electrogenic transport of potassium into the cytoplasm. This subunit binds the periplasmic potassium ions and delivers the ions to the membrane domain of KdpB through an intramembrane tunnel. The polypeptide is Potassium-transporting ATPase potassium-binding subunit (Methylococcus capsulatus (strain ATCC 33009 / NCIMB 11132 / Bath)).